A 352-amino-acid polypeptide reads, in one-letter code: 3-isopropylmalate dehydrogenase (352 aa).

76–89 is an NAD(+) binding site; that stretch reads GPKWENLPHEHKPE. Arg96, Arg106, Arg134, and Asp219 together coordinate substrate. Mg(2+) contacts are provided by Asp219, Asp243, and Asp247. 276 to 288 provides a ligand contact to NAD(+); that stretch reads GSAPDIAGQNKAN.

Belongs to the isocitrate and isopropylmalate dehydrogenases family. LeuB type 1 subfamily. In terms of assembly, homodimer. The cofactor is Mg(2+). Mn(2+) is required as a cofactor.

It is found in the cytoplasm. It carries out the reaction (2R,3S)-3-isopropylmalate + NAD(+) = 4-methyl-2-oxopentanoate + CO2 + NADH. It functions in the pathway amino-acid biosynthesis; L-leucine biosynthesis; L-leucine from 3-methyl-2-oxobutanoate: step 3/4. In terms of biological role, catalyzes the oxidation of 3-carboxy-2-hydroxy-4-methylpentanoate (3-isopropylmalate) to 3-carboxy-4-methyl-2-oxopentanoate. The product decarboxylates to 4-methyl-2 oxopentanoate. This chain is 3-isopropylmalate dehydrogenase, found in Chlorobium chlorochromatii (strain CaD3).